We begin with the raw amino-acid sequence, 437 residues long: 5-hydroxytryptamine receptor 3B (437 aa).

The first 21 residues, 1-21 (MILLWSCLLVAVVGILGTATP), serve as a signal peptide directing secretion. The Extracellular portion of the chain corresponds to 22-238 (QPGNSSLHRL…VVIRRCPLAY (217 aa)). N-linked (GlcNAc...) asparagine glycosylation is found at Asn25, Asn92, and Asn134. Cys151 and Cys165 are joined by a disulfide. Residues 239-259 (VVSLLIPSIFLMLVDLGSFYL) traverse the membrane as a helical segment. Over 260 to 264 (PPNCR) the chain is Cytoplasmic. The helical transmembrane segment at 265–282 (ARIVFKTNVLVGYTVFRV) threads the bilayer. N-linked (GlcNAc...) asparagine glycosylation occurs at Asn283. Residues 283–292 (NMSDEVPRSA) lie on the Extracellular side of the membrane. A helical membrane pass occupies residues 293-313 (GCTPLIGVFFTVCMALLVLSL). Residues 314–410 (SKSILLIKFL…WLAILYRFDQ (97 aa)) lie on the Cytoplasmic side of the membrane. The tract at residues 377–409 (FWFQFRSINNSLRTRDQIHQKEVEWLAILYRFD) is HA-stretch; determines single-channel conductance in 5-HT3 receptors. A helical membrane pass occupies residues 411–431 (LLFRIYLAVLGLYTVTLCSLW). Topologically, residues 432–437 (ALWSRM) are extracellular.

It belongs to the ligand-gated ion channel (TC 1.A.9) family. 5-hydroxytryptamine receptor (TC 1.A.9.2) subfamily. HTR3B sub-subfamily. In terms of assembly, forms homopentameric as well as heteropentameric serotonin-activated cation-selective channel complexes with HTR3A. The homomeric complex is not functional. Heteropentameric complexes display properties which resemble that of neuronal serotonin-activated channels in vivo. Post-translationally, N-glycosylation is required for membrane localization.

The protein localises to the postsynaptic cell membrane. Its subcellular location is the cell membrane. It catalyses the reaction Na(+)(in) = Na(+)(out). The catalysed reaction is K(+)(in) = K(+)(out). The enzyme catalyses Ca(2+)(in) = Ca(2+)(out). Its function is as follows. Forms serotonin (5-hydroxytryptamine/5-HT3)-activated cation-selective channel complexes, which when activated cause fast, depolarizing responses in neurons. The chain is 5-hydroxytryptamine receptor 3B from Mus musculus (Mouse).